We begin with the raw amino-acid sequence, 152 residues long: Cyanate hydratase (152 aa).

Catalysis depends on residues Arg98, Glu101, and Ser124.

Belongs to the cyanase family.

It catalyses the reaction cyanate + hydrogencarbonate + 3 H(+) = NH4(+) + 2 CO2. In terms of biological role, catalyzes the reaction of cyanate with bicarbonate to produce ammonia and carbon dioxide. The chain is Cyanate hydratase from Uncinocarpus reesii (strain UAMH 1704).